The chain runs to 105 residues: Antithrombin-III (105 aa).

The first 17 residues, 1 to 17, serve as a signal peptide directing secretion; that stretch reads MHLFIGVSLRPLGHGIP. Residues 38 to 105 are disordered; it reads ICIYRNPEKK…MRRTSSCRPS (68 aa). The segment covering 43–53 has biased composition (basic and acidic residues); the sequence is NPEKKPQERRG.

This sequence belongs to the serpin family. In terms of assembly, forms protease inhibiting heterodimer with TMPRSS7. Plasma.

It localises to the secreted. Its subcellular location is the extracellular space. In terms of biological role, most important serine protease inhibitor in plasma that regulates the blood coagulation cascade. AT-III inhibits thrombin, matriptase-3/TMPRSS7, as well as factors IXa, Xa and XIa. Its inhibitory activity is greatly enhanced in the presence of heparin. The protein is Antithrombin-III (SERPINC1) of Gallus gallus (Chicken).